The sequence spans 876 residues: DNA mismatch repair protein MutS (876 aa).

626–633 is a binding site for ATP; sequence GPNMGGKS.

It belongs to the DNA mismatch repair MutS family.

Functionally, this protein is involved in the repair of mismatches in DNA. It is possible that it carries out the mismatch recognition step. This protein has a weak ATPase activity. The sequence is that of DNA mismatch repair protein MutS from Bordetella bronchiseptica (strain ATCC BAA-588 / NCTC 13252 / RB50) (Alcaligenes bronchisepticus).